The following is a 154-amino-acid chain: Interleukin-2 (154 aa).

An N-terminal signal peptide occupies residues 1 to 20; the sequence is MYKMQLLCCIALTLALMANG. The O-linked (GalNAc...) threonine glycan is linked to Thr-23. A disulfide bond links Cys-78 and Cys-126.

It belongs to the IL-2 family.

The protein resides in the secreted. Cytokine produced by activated CD4-positive helper T-cells and to a lesser extend activated CD8-positive T-cells and natural killer (NK) cells that plays pivotal roles in the immune response and tolerance. Binds to a receptor complex composed of either the high-affinity trimeric IL-2R (IL2RA/CD25, IL2RB/CD122 and IL2RG/CD132) or the low-affinity dimeric IL-2R (IL2RB and IL2RG). Interaction with the receptor leads to oligomerization and conformation changes in the IL-2R subunits resulting in downstream signaling starting with phosphorylation of JAK1 and JAK3. In turn, JAK1 and JAK3 phosphorylate the receptor to form a docking site leading to the phosphorylation of several substrates including STAT5. This process leads to activation of several pathways including STAT, phosphoinositide-3-kinase/PI3K and mitogen-activated protein kinase/MAPK pathways. Functions as a T-cell growth factor and can increase NK-cell cytolytic activity as well. Promotes strong proliferation of activated B-cells and subsequently immunoglobulin production. Plays a pivotal role in regulating the adaptive immune system by controlling the survival and proliferation of regulatory T-cells, which are required for the maintenance of immune tolerance. Moreover, participates in the differentiation and homeostasis of effector T-cell subsets, including Th1, Th2, Th17 as well as memory CD8-positive T-cells. The polypeptide is Interleukin-2 (IL2) (Sus scrofa (Pig)).